Here is a 313-residue protein sequence, read N- to C-terminus: Acetyl-coenzyme A carboxylase carboxyl transferase subunit alpha (313 aa).

The CoA carboxyltransferase C-terminal domain occupies 34-288 (KLKDQRDIAL…KNVVLEAVNE (255 aa)).

It belongs to the AccA family. Acetyl-CoA carboxylase is a heterohexamer composed of biotin carboxyl carrier protein (AccB), biotin carboxylase (AccC) and two subunits each of ACCase subunit alpha (AccA) and ACCase subunit beta (AccD).

The protein localises to the cytoplasm. The catalysed reaction is N(6)-carboxybiotinyl-L-lysyl-[protein] + acetyl-CoA = N(6)-biotinyl-L-lysyl-[protein] + malonyl-CoA. The protein operates within lipid metabolism; malonyl-CoA biosynthesis; malonyl-CoA from acetyl-CoA: step 1/1. Functionally, component of the acetyl coenzyme A carboxylase (ACC) complex. First, biotin carboxylase catalyzes the carboxylation of biotin on its carrier protein (BCCP) and then the CO(2) group is transferred by the carboxyltransferase to acetyl-CoA to form malonyl-CoA. The protein is Acetyl-coenzyme A carboxylase carboxyl transferase subunit alpha of Fusobacterium nucleatum subsp. nucleatum (strain ATCC 25586 / DSM 15643 / BCRC 10681 / CIP 101130 / JCM 8532 / KCTC 2640 / LMG 13131 / VPI 4355).